The chain runs to 238 residues: Sugar fermentation stimulation protein homolog (238 aa).

It belongs to the SfsA family.

This chain is Sugar fermentation stimulation protein homolog, found in Klebsiella pneumoniae (strain 342).